Reading from the N-terminus, the 404-residue chain is Cysteine desulfurase IscS (404 aa).

Pyridoxal 5'-phosphate-binding positions include 75–76 (AT), Asn-155, Gln-183, and 203–205 (SAH). N6-(pyridoxal phosphate)lysine is present on Lys-206. Thr-243 serves as a coordination point for pyridoxal 5'-phosphate. The Cysteine persulfide intermediate role is filled by Cys-328. Position 328 (Cys-328) interacts with [2Fe-2S] cluster.

Belongs to the class-V pyridoxal-phosphate-dependent aminotransferase family. NifS/IscS subfamily. Homodimer. Forms a heterotetramer with IscU, interacts with other sulfur acceptors. Requires pyridoxal 5'-phosphate as cofactor.

It is found in the cytoplasm. It catalyses the reaction (sulfur carrier)-H + L-cysteine = (sulfur carrier)-SH + L-alanine. The protein operates within cofactor biosynthesis; iron-sulfur cluster biosynthesis. Master enzyme that delivers sulfur to a number of partners involved in Fe-S cluster assembly, tRNA modification or cofactor biosynthesis. Catalyzes the removal of elemental sulfur atoms from cysteine to produce alanine. Functions as a sulfur delivery protein for Fe-S cluster synthesis onto IscU, an Fe-S scaffold assembly protein, as well as other S acceptor proteins. The protein is Cysteine desulfurase IscS of Vesicomyosocius okutanii subsp. Calyptogena okutanii (strain HA).